Consider the following 210-residue polypeptide: Neuroendocrine protein 7B2 (210 aa).

Positions 1 to 24 are cleaved as a signal peptide; sequence MTSRMAILSGLLFWLLLEWNPAFA. Cysteine 118 and cysteine 128 are joined by a disulfide. A phosphoserine mark is found at serine 139 and serine 203.

It belongs to the 7B2 family. Interacts with PCSK2/PC2 early in the secretory pathway. Dissociation occurs at later stages. Proteolytically cleaved in the Golgi by a furin-like convertase to generate bioactive peptides. Post-translationally, sulfated on tyrosine residues.

It is found in the secreted. Acts as a molecular chaperone for PCSK2/PC2, preventing its premature activation in the regulated secretory pathway. Binds to inactive PCSK2 in the endoplasmic reticulum and facilitates its transport from there to later compartments of the secretory pathway where it is proteolytically matured and activated. Also required for cleavage of PCSK2 but does not appear to be involved in its folding. Plays a role in regulating pituitary hormone secretion. The C-terminal peptide inhibits PCSK2 in vitro. The protein is Neuroendocrine protein 7B2 (Scg5) of Rattus norvegicus (Rat).